A 328-amino-acid chain; its full sequence is UPF0285 protein MJ1370 (328 aa).

The protein belongs to the UPF0285 family.

In Methanocaldococcus jannaschii (strain ATCC 43067 / DSM 2661 / JAL-1 / JCM 10045 / NBRC 100440) (Methanococcus jannaschii), this protein is UPF0285 protein MJ1370.